Here is a 947-residue protein sequence, read N- to C-terminus: Plasma membrane ATPase 2 (947 aa).

The tract at residues 1-103 (MSSTEAKQYK…TDGVHAGQRV (103 aa)) is disordered. The Cytoplasmic segment spans residues 1–144 (MSSTEAKQYK…AEENESLIVK (144 aa)). Positions 7–22 (KQYKEKPSKEYLHASD) are enriched in basic and acidic residues. The span at 26 to 61 (PANNSAASSSSSSSTSTSASSSAAAVPRKAAAASAA) shows a compositional bias: low complexity. Residues 62–74 (DDSDSDEDIDQLI) are compositionally biased toward acidic residues. The chain crosses the membrane as a helical span at residues 145 to 165 (FLMFFVGPIQFVMEAAAILAA). The Extracellular segment spans residues 166-169 (GLSD). The helical transmembrane segment at 170-189 (WVDVGVICALLLLNASVGFI) threads the bilayer. Residues 190 to 320 (QEFQAGSIVD…VEGHFTEVLN (131 aa)) are Cytoplasmic-facing. Residues 321-342 (GIGIILLVLVIATLLLVWTACF) form a helical membrane-spanning segment. Over 343 to 353 (YRTVGIVSILR) the chain is Extracellular. A helical transmembrane segment spans residues 354–376 (YTLGITIIGVPVGLPAVVTTTMA). Residues 377–748 (VGAAYLAKKQ…IAILNNSLDI (372 aa)) are Cytoplasmic-facing. D407 acts as the 4-aspartylphosphate intermediate in catalysis. Residues D663 and D667 each coordinate Mg(2+). A helical membrane pass occupies residues 749–767 (NLIVFIAIFADVATLTIAY). At 768–783 (DNAPYAPEPVKWNLPR) the chain is on the extracellular side. Residues 784-803 (LWGMSIILGIVLAIGSWITL) traverse the membrane as a helical segment. Over 804–853 (TTMFLPNGGIIQNFGAMNGVMFLQISLTENWLIFVTRAAGPFWSSIPSWQ) the chain is Cytoplasmic. The chain crosses the membrane as a helical span at residues 854 to 874 (LAGAVFAVDIIATMFTLFGWW). The Extracellular segment spans residues 875 to 886 (SENWTDIVSVVR). Residues 887–903 (VWIWSIGIFCVLGGFYY) form a helical membrane-spanning segment. The Cytoplasmic segment spans residues 904–947 (IMSTSQAFDRLMNGKSLKEKKSTRSVEDFMAAMQRVSTQHEKSS).

This sequence belongs to the cation transport ATPase (P-type) (TC 3.A.3) family. Type IIIA subfamily.

The protein resides in the cell membrane. The enzyme catalyses ATP + H2O + H(+)(in) = ADP + phosphate + 2 H(+)(out). Its function is as follows. The plasma membrane ATPase of plants and fungi is a hydrogen ion pump. The proton gradient it generates drives the active transport of nutrients by H(+)-symport. The resulting external acidification and/or internal alkinization may mediate growth responses. This Saccharomyces cerevisiae (strain ATCC 204508 / S288c) (Baker's yeast) protein is Plasma membrane ATPase 2 (PMA2).